The sequence spans 694 residues: Elongation factor G (694 aa).

A tr-type G domain is found at 8-284; it reads EKLRNIGIVA…AVIDFLPSPV (277 aa). GTP contacts are provided by residues 17-24, 81-85, and 135-138; these read AHIDAGKT, DTPGH, and NKMD.

It belongs to the TRAFAC class translation factor GTPase superfamily. Classic translation factor GTPase family. EF-G/EF-2 subfamily.

It is found in the cytoplasm. Catalyzes the GTP-dependent ribosomal translocation step during translation elongation. During this step, the ribosome changes from the pre-translocational (PRE) to the post-translocational (POST) state as the newly formed A-site-bound peptidyl-tRNA and P-site-bound deacylated tRNA move to the P and E sites, respectively. Catalyzes the coordinated movement of the two tRNA molecules, the mRNA and conformational changes in the ribosome. This is Elongation factor G from Persephonella marina (strain DSM 14350 / EX-H1).